Consider the following 146-residue polypeptide: Small ribosomal subunit protein uS9x (146 aa).

The protein belongs to the universal ribosomal protein uS9 family.

It localises to the cytoplasm. The chain is Small ribosomal subunit protein uS9x (RPS16C) from Arabidopsis thaliana (Mouse-ear cress).